Consider the following 160-residue polypeptide: Cytochrome b6-f complex subunit 4 (160 aa).

Transmembrane regions (helical) follow at residues 36-56 (LLYV…GLAV), 95-115 (LLGI…PFIE), and 131-151 (AVFL…TFPI).

The protein belongs to the cytochrome b family. PetD subfamily. In terms of assembly, the 4 large subunits of the cytochrome b6-f complex are cytochrome b6, subunit IV (17 kDa polypeptide, PetD), cytochrome f and the Rieske protein, while the 4 small subunits are PetG, PetL, PetM and PetN. The complex functions as a dimer.

The protein localises to the cellular thylakoid membrane. Its function is as follows. Component of the cytochrome b6-f complex, which mediates electron transfer between photosystem II (PSII) and photosystem I (PSI), cyclic electron flow around PSI, and state transitions. The polypeptide is Cytochrome b6-f complex subunit 4 (Crocosphaera subtropica (strain ATCC 51142 / BH68) (Cyanothece sp. (strain ATCC 51142))).